We begin with the raw amino-acid sequence, 822 residues long: MGFGSDLKNSHEAVLKLQDWELRLLETVKKFMALRIKSDKEYASTLQNLCNQVDKESTVQMNYVSNVSKSWLLMIQQTEQLSRIMKTHAEDLNSGPLHRLTMMIKDKQQVKKSYIGVHQQIEAEMIKVTKTELEKLKCSYRQLIKEMNSAKEKYKEALAKGKETEKAKERYDKATMKLHMLHNQYVLALKGAQLHQNQYYDITLPLLLDSLQKMQEEMIKALKGIFDEYSQITSLVTEEIVNVHKEIQMSVEQIDPSTEYNNFIDVHRTTAAKEQEIEFDTSLLEENENLQANEIMWNNLTAESLQVMLKTLAEELMQTQQMLLNKEEAVLELEKRIEESSETCEKKSDIVLLLSQKQALEELKQSVQQLRCTEAKFSAQKELLEQKVQENDGKEPPPVVNYEEDARSVTSMERKERLSKFESIRHSIAGIIRSPKSALGSSALSDMISISEKPLAEQDWYHGAIPRIEAQELLKKQGDFLVRESHGKPGEYVLSVYSDGQRRHFIIQYVDNMYRFEGTGFSNIPQLIDHHYTTKQVITKKSGVVLLNPIPKDKKWILSHEDVILGELLGKGNFGEVYKGTLKDKTSVAVKTCKEDLPQELKIKFLQEAKILKQYDHPNIVKLIGVCTQRQPVYIIMELVSGGDFLTFLRRKKDELKLKQLVKFSLDAAAGMLYLESKNCIHRDLAARNCLVGENNVLKISDFGMSRQEDGGVYSSSGLKQIPIKWTAPEALNYGRYSSESDVWSFGILLWETFSLGVCPYPGMTNQQAREQVERGYRMSAPQHCPEDISKIMMKCWDYKPENRPKFSELQKELTIIKRKLT.

The F-BAR domain maps to 1-259 (MGFGSDLKNS…SVEQIDPSTE (259 aa)). An important for interaction with membranes containing phosphoinositides region spans residues 1-300 (MGFGSDLKNS…QANEIMWNNL (300 aa)). Coiled-coil stretches lie at residues 123–185 (AEMI…HNQY) and 301–390 (TAES…KVQE). Tyr402 carries the phosphotyrosine modification. At Ser434 the chain carries Phosphoserine. One can recognise an SH2 domain in the interval 460-550 (WYHGAIPRIE…KSGVVLLNPI (91 aa)). The Protein kinase domain maps to 563–816 (VILGELLGKG…FSELQKELTI (254 aa)). Residues 569-577 (LGKGNFGEV) and Lys591 each bind ATP. Tyr615 is subject to Phosphotyrosine; by autocatalysis. Asp684 (proton acceptor) is an active-site residue. Tyr714 is subject to Phosphotyrosine; by autocatalysis.

It belongs to the protein kinase superfamily. Tyr protein kinase family. Fes/fps subfamily. Homotrimer. Interacts with ARHGDIA, IRS1, JAK1, NRP1, PIK3R1, PLEC and TMF1. Interacts with PPP1CA and regulates its phosphorylation at 'Thr-320'. Interacts with CTNND1, EGFR, FLT3, PECAM1, PDGFR and STAT3. Interacts (via SH2 domain) with CTTN. Interacts with HSP90; this stabilizes phosphorylated FER and protects FER against proteasomal degradation. Component of a complex that contains at least FER, CTTN and PTK2/FAK1. Post-translationally, autophosphorylated. In terms of processing, polyubiquitinated; this leads to proteasomal degradation. Isoform 1 is detected in normal colon and in fibroblasts (at protein level). Isoform 3 is detected in normal testis, in colon carcinoma-derived metastases in lung, liver and ovary, and in colon carcinoma and hepato carcinoma cell lines (at protein level). Isoform 3 is not detected in normal colon or in normal fibroblasts (at protein level). Widely expressed.

It is found in the cytoplasm. Its subcellular location is the cytoskeleton. The protein resides in the cell membrane. The protein localises to the cell projection. It localises to the cell junction. It is found in the membrane. Its subcellular location is the nucleus. The protein resides in the cell cortex. It catalyses the reaction L-tyrosyl-[protein] + ATP = O-phospho-L-tyrosyl-[protein] + ADP + H(+). Its activity is regulated as follows. Activated by phosphatidic acid binding. Activated by hydrogen peroxide (in vitro). Activated by reactive oxygen species (ROS). In terms of biological role, tyrosine-protein kinase that acts downstream of cell surface receptors for growth factors and plays a role in the regulation of the actin cytoskeleton, microtubule assembly, lamellipodia formation, cell adhesion, cell migration and chemotaxis. Acts downstream of EGFR, KIT, PDGFRA and PDGFRB. Acts downstream of EGFR to promote activation of NF-kappa-B and cell proliferation. May play a role in the regulation of the mitotic cell cycle. Plays a role in the insulin receptor signaling pathway and in activation of phosphatidylinositol 3-kinase. Acts downstream of the activated FCER1 receptor and plays a role in FCER1 (high affinity immunoglobulin epsilon receptor)-mediated signaling in mast cells. Plays a role in the regulation of mast cell degranulation. Plays a role in leukocyte recruitment and diapedesis in response to bacterial lipopolysaccharide (LPS). Plays a role in synapse organization, trafficking of synaptic vesicles, the generation of excitatory postsynaptic currents and neuron-neuron synaptic transmission. Plays a role in neuronal cell death after brain damage. Phosphorylates CTTN, CTNND1, PTK2/FAK1, GAB1, PECAM1 and PTPN11. May phosphorylate JUP and PTPN1. Can phosphorylate STAT3, but the biological relevance of this depends on cell type and stimulus. The sequence is that of Tyrosine-protein kinase Fer (FER) from Homo sapiens (Human).